A 72-amino-acid polypeptide reads, in one-letter code: NAD(P)H-quinone oxidoreductase subunit O (72 aa).

This sequence belongs to the complex I NdhO subunit family. NDH-1 can be composed of about 15 different subunits; different subcomplexes with different compositions have been identified which probably have different functions.

Its subcellular location is the cellular thylakoid membrane. The catalysed reaction is a plastoquinone + NADH + (n+1) H(+)(in) = a plastoquinol + NAD(+) + n H(+)(out). It carries out the reaction a plastoquinone + NADPH + (n+1) H(+)(in) = a plastoquinol + NADP(+) + n H(+)(out). In terms of biological role, NDH-1 shuttles electrons from an unknown electron donor, via FMN and iron-sulfur (Fe-S) centers, to quinones in the respiratory and/or the photosynthetic chain. The immediate electron acceptor for the enzyme in this species is believed to be plastoquinone. Couples the redox reaction to proton translocation, and thus conserves the redox energy in a proton gradient. Cyanobacterial NDH-1 also plays a role in inorganic carbon-concentration. The sequence is that of NAD(P)H-quinone oxidoreductase subunit O from Synechococcus elongatus (strain ATCC 33912 / PCC 7942 / FACHB-805) (Anacystis nidulans R2).